Here is a 166-residue protein sequence, read N- to C-terminus: Large ribosomal subunit protein uL10 (166 aa).

Belongs to the universal ribosomal protein uL10 family. As to quaternary structure, part of the ribosomal stalk of the 50S ribosomal subunit. The N-terminus interacts with L11 and the large rRNA to form the base of the stalk. The C-terminus forms an elongated spine to which L12 dimers bind in a sequential fashion forming a multimeric L10(L12)X complex.

Forms part of the ribosomal stalk, playing a central role in the interaction of the ribosome with GTP-bound translation factors. The sequence is that of Large ribosomal subunit protein uL10 (rplJ) from Streptococcus pyogenes serotype M1.